A 176-amino-acid chain; its full sequence is Macro domain-containing protein mll7730 (176 aa).

Positions 1–174 constitute a Macro domain; that stretch reads MSKALDRIRI…LYLRAVAALR (174 aa).

The protein belongs to the MacroD-type family.

The sequence is that of Macro domain-containing protein mll7730 from Mesorhizobium japonicum (strain LMG 29417 / CECT 9101 / MAFF 303099) (Mesorhizobium loti (strain MAFF 303099)).